Consider the following 810-residue polypeptide: AMP deaminase (810 aa).

Over residues Met-1 to Asn-10 the composition is skewed to polar residues. 2 disordered regions span residues Met-1–Ser-61 and Ala-114–Leu-137. Ser-19, Ser-58, and Ser-61 each carry phosphoserine. The span at His-125–Leu-137 shows a compositional bias: polar residues. Phosphoserine is present on Ser-138. The Zn(2+) site is built by His-362 and His-364. Substrate contacts are provided by residues His-364 and Lys-433–Tyr-438. His-630 is a binding site for Zn(2+). Glu-633 is a binding site for substrate. His-652 acts as the Proton acceptor in catalysis. Zn(2+) is bound at residue Asp-707. Asp-708 to Gln-711 lines the substrate pocket.

The protein belongs to the metallo-dependent hydrolases superfamily. Adenosine and AMP deaminases family. Homotetramer. It depends on Zn(2+) as a cofactor.

It carries out the reaction AMP + H2O + H(+) = IMP + NH4(+). The protein operates within purine metabolism; IMP biosynthesis via salvage pathway; IMP from AMP: step 1/1. AMP deaminase plays a critical role in energy metabolism. The chain is AMP deaminase (AMD1) from Saccharomyces cerevisiae (strain ATCC 204508 / S288c) (Baker's yeast).